The chain runs to 337 residues: B3 domain-containing protein REM16 (337 aa).

DNA-binding regions (TF-B3) lie at residues 22 to 116 and 223 to 321; these read TLHF…FDGQ and FLVF…FRGE.

It is found in the nucleus. In Arabidopsis thaliana (Mouse-ear cress), this protein is B3 domain-containing protein REM16 (REM16).